Here is a 143-residue protein sequence, read N- to C-terminus: uncharacterized protein (143 aa).

The tract at residues 1 to 37 (MSAPASSSAIAPSQPTAPGHARHSASWSASASDPSGA) is disordered.

The protein belongs to the dynein light chain Tctex-type family.

This is an uncharacterized protein from Mycosarcoma maydis (Corn smut fungus).